Reading from the N-terminus, the 380-residue chain is Cytochrome b (380 aa).

4 helical membrane passes run 34–54 (FGSLLGICLITQILTGLLLAA), 78–99 (WLIRNLHANGASFFFICIYLHI), 114–134 (WNTGVTLLLTLMATAFVGYVL), and 179–199 (FFALHFLLPFMIAGLTLIHLT). Residues His-84 and His-98 each contribute to the heme b site. Heme b-binding residues include His-183 and His-197. Residue His-202 coordinates a ubiquinone. The next 4 membrane-spanning stretches (helical) occupy residues 227–247 (LKDILGFAIMLLLLTTLALFS), 289–309 (LGGVLALAASVLILFLTPFLH), 321–341 (LSQLLFWLLVANLLILTWVGS), and 348–368 (FIIIGQMASITYFIIILVLFP).

This sequence belongs to the cytochrome b family. In terms of assembly, the cytochrome bc1 complex contains 11 subunits: 3 respiratory subunits (MT-CYB, CYC1 and UQCRFS1), 2 core proteins (UQCRC1 and UQCRC2) and 6 low-molecular weight proteins (UQCRH/QCR6, UQCRB/QCR7, UQCRQ/QCR8, UQCR10/QCR9, UQCR11/QCR10 and a cleavage product of UQCRFS1). This cytochrome bc1 complex then forms a dimer. The cofactor is heme b.

The protein resides in the mitochondrion inner membrane. Its function is as follows. Component of the ubiquinol-cytochrome c reductase complex (complex III or cytochrome b-c1 complex) that is part of the mitochondrial respiratory chain. The b-c1 complex mediates electron transfer from ubiquinol to cytochrome c. Contributes to the generation of a proton gradient across the mitochondrial membrane that is then used for ATP synthesis. The sequence is that of Cytochrome b (MT-CYB) from Pharomachrus antisianus (Crested quetzal).